A 143-amino-acid polypeptide reads, in one-letter code: Putative pre-16S rRNA nuclease (143 aa).

This sequence belongs to the YqgF nuclease family.

It is found in the cytoplasm. Its function is as follows. Could be a nuclease involved in processing of the 5'-end of pre-16S rRNA. The polypeptide is Putative pre-16S rRNA nuclease (Mesomycoplasma hyopneumoniae (strain 232) (Mycoplasma hyopneumoniae)).